The primary structure comprises 213 residues: uncharacterized protein (213 aa).

S-adenosyl-L-methionine contacts are provided by Gly53, Glu74, and Asp96.

Belongs to the methyltransferase superfamily. YrrT family.

In terms of biological role, could be a S-adenosyl-L-methionine-dependent methyltransferase. This is an uncharacterized protein from Oceanobacillus iheyensis (strain DSM 14371 / CIP 107618 / JCM 11309 / KCTC 3954 / HTE831).